The following is a 146-amino-acid chain: UPF0178 protein BAMEG_1545 (146 aa).

The protein belongs to the UPF0178 family.

The chain is UPF0178 protein BAMEG_1545 from Bacillus anthracis (strain CDC 684 / NRRL 3495).